The sequence spans 135 residues: Large ribosomal subunit protein bL19 (135 aa).

Belongs to the bacterial ribosomal protein bL19 family.

This protein is located at the 30S-50S ribosomal subunit interface and may play a role in the structure and function of the aminoacyl-tRNA binding site. The sequence is that of Large ribosomal subunit protein bL19 from Xanthomonas euvesicatoria pv. vesicatoria (strain 85-10) (Xanthomonas campestris pv. vesicatoria).